The sequence spans 557 residues: TNF receptor-associated factor 5 (557 aa).

The RING-type zinc finger occupies 45-85; sequence CAFCHSVLHNPHQTGCGHRFCQHCILSLRELNTVPICPVDK. 2 consecutive TRAF-type zinc fingers follow at residues 127-181 and 182-239; these read DHLQ…INLQ and NHEE…RNLQ. Residues 237 to 342 adopt a coiled-coil conformation; sequence NLQQHEHSAL…VNQQQNKFDL (106 aa). Lys318 is covalently cross-linked (Glycyl lysine isopeptide (Lys-Gly) (interchain with G-Cter in ubiquitin)). Positions 345–557 are interaction with EIF2AK2/PKR; the sequence is LMEAVDTVKQ…AVDLTDLEDL (213 aa). In terms of domain architecture, MATH spans 403-549; it reads NGKLIWKVTD…DDTLFLKVAV (147 aa).

Belongs to the TNF receptor-associated factor family. A subfamily. In terms of assembly, homotrimer. Heteromer with TRAF3. Associates with TNFRSF5/CD40 through interaction with TRAF3. Associates with LTBR/TNFRSF3, TNFRSF4, TNFRSF8/CD30, TNFRSF11A/RANK, TNFRSF13B/TACI, TNFRSF14, TNFRSF17, TNFRSF19/TROY, RIPK2, MAP3K14, MAP3K5, and TRAF and TNF receptor associated protein TDP2. Interacts (via C-terminus) with EIF2AK2/PKR (via the kinase catalytic domain). In terms of processing, ubiquitinated at Lys-318 by the SCF(FBXL2) complex, leading to its degradation by the proteasome. Expressed in spleen, thymus, prostate, testis, ovary, small intestine, colon, and peripheral blood.

Its subcellular location is the cytoplasm. It localises to the cytosol. Functionally, adapter protein and signal transducer that links members of the tumor necrosis factor receptor family to different signaling pathways by association with the receptor cytoplasmic domain and kinases. Mediates activation of NF-kappa-B and probably JNK. Seems to be involved in apoptosis. Plays a role in mediating activation of NF-kappa-B by EIF2AK2/PKR. In Homo sapiens (Human), this protein is TNF receptor-associated factor 5 (TRAF5).